The following is a 163-amino-acid chain: Cyclic pyranopterin monophosphate synthase (163 aa).

Substrate contacts are provided by residues 75–77 and 113–114; these read LCH and ME. Asp128 is a catalytic residue.

The protein belongs to the MoaC family. As to quaternary structure, homohexamer; trimer of dimers.

The catalysed reaction is (8S)-3',8-cyclo-7,8-dihydroguanosine 5'-triphosphate = cyclic pyranopterin phosphate + diphosphate. Its pathway is cofactor biosynthesis; molybdopterin biosynthesis. Its function is as follows. Catalyzes the conversion of (8S)-3',8-cyclo-7,8-dihydroguanosine 5'-triphosphate to cyclic pyranopterin monophosphate (cPMP). The sequence is that of Cyclic pyranopterin monophosphate synthase from Magnetococcus marinus (strain ATCC BAA-1437 / JCM 17883 / MC-1).